Consider the following 1470-residue polypeptide: Collagen alpha-1(XVII) chain (1470 aa).

Disordered regions lie at residues Met-1 to Arg-155, Lys-167 to Glu-193, and Ser-422 to Ser-452. Residues Met-1–Trp-476 lie on the Cytoplasmic side of the membrane. The nonhelical region (NC16) stretch occupies residues Met-1 to Arg-573. A compositionally biased stretch (basic and acidic residues) spans Arg-9–Val-19. Positions Gly-60 to Asn-74 are enriched in low complexity. 3 stretches are compositionally biased toward polar residues: residues Ala-75 to Ser-96, Glu-111 to Pro-120, and Arg-170 to Leu-184. Residues Arg-146 to Ser-231 form a necessary for interaction with DST and for the recruitment of DST to hemidesmosome region. The span at Arg-430–Ser-452 shows a compositional bias: gly residues. The helical; Signal-anchor for type II membrane protein transmembrane segment at Leu-477–Leu-497 threads the bilayer. At Ala-498–Pro-1470 the chain is on the extracellular side. At Ser-551 the chain carries Phosphoserine; by CK2. 5 disordered regions span residues Glu-568 to Ser-873, Gly-885 to Gly-999, Asp-1159 to Ser-1181, Thr-1194 to Ala-1220, and Phe-1249 to Gly-1298. The triple-helical region stretch occupies residues Gly-574–Gln-1456. The span at Pro-597–Glu-609 shows a compositional bias: pro residues. Low complexity-rich tracts occupy residues Glu-742 to Asp-755 and Asp-781 to Pro-803. Positions Pro-827–Ala-848 are enriched in pro residues. Low complexity predominate over residues Pro-850–Ser-873. Pro residues-rich tracts occupy residues Pro-891–Pro-914, Pro-940–Pro-949, Pro-982–Pro-992, Pro-1166–Met-1175, Pro-1201–Pro-1215, and Pro-1253–Pro-1262. N-linked (GlcNAc...) asparagine glycosylation is present at Asn-1273. Residues Ser-1275–Thr-1290 show a composition bias toward low complexity. An N-linked (GlcNAc...) asparagine glycan is attached at Asn-1395. The interval Thr-1406–Pro-1470 is disordered. Residues Pro-1434–Pro-1443 are compositionally biased toward pro residues. The span at Asn-1446 to Asp-1455 shows a compositional bias: basic and acidic residues. The tract at residues Val-1457 to Pro-1470 is nonhelical region (NC1). Over residues Gly-1460–Pro-1470 the composition is skewed to basic residues.

Homotrimers of alpha 1(XVII)chains. Interacts (via cytoplasmic region) with ITGB4 (via cytoplasmic region). Interacts (via cytoplasmic region) with DST (via N-terminus). Interacts (via N-terminus) with PLEC. Interacts (via cytoplasmic region) with DSP. In terms of processing, the intracellular/endo domain is disulfide-linked. Prolines at the third position of the tripeptide repeating unit (G-X-Y) are hydroxylated in some or all of the chains. Post-translationally, the ectodomain is shedded from the surface of keratinocytes resulting in a 120-kDa soluble form, also named as 120 kDa linear IgA disease antigen homolog. The shedding is mediated by membrane-bound metalloproteases. This cleavage is inhibited by phosphorylation at Ser-551.

It localises to the cell junction. The protein localises to the hemidesmosome. The protein resides in the membrane. Its subcellular location is the secreted. It is found in the extracellular space. It localises to the extracellular matrix. The protein localises to the basement membrane. May play a role in the integrity of hemidesmosome and the attachment of basal keratinocytes to the underlying basement membrane. Functionally, the 120 kDa linear IgA disease antigen homolog is an anchoring filament component involved in dermal-epidermal cohesion. This Mus musculus (Mouse) protein is Collagen alpha-1(XVII) chain (Col17a1).